The sequence spans 1547 residues: ABC multidrug transporter atrF (1547 aa).

Disordered regions lie at residues 1-66 and 85-123; these read MADG…RRGA and TRSV…IDGD. The span at 10–19 shows a compositional bias: polar residues; that stretch reads SATSTTMETN. Low complexity predominate over residues 36–47; the sequence is SSSMTATSSELS. Over residues 51-66 the composition is skewed to basic and acidic residues; it reads RWGERDQGEPVSRRGA. Residues 111–123 show a composition bias toward acidic residues; that stretch reads KAIDEEDSTIDGD. The ABC transporter 1 domain occupies 197–439; the sequence is IPQLRFGKQP…FVNLGFHCPE (243 aa). N299 and N363 each carry an N-linked (GlcNAc...) asparagine glycan. The next 7 helical transmembrane spans lie at 552–572, 586–606, 635–655, 657–677, 698–718, 722–742, and 804–824; these read LYTK…LFYG, ALFF…MPAV, FPAI…MTGL, VTAS…FSIT, GIAL…QGLI, IWFG…AVLT, and FGVV…AAEF. Positions 892–1130 constitute an ABC transporter 2 domain; sequence FTWSNVEYTV…DVIKYFADRG (239 aa). The N-linked (GlcNAc...) asparagine glycan is linked to N905. 928–935 serves as a coordination point for ATP; the sequence is GASGAGKT. Residues N980 and N999 are each glycosylated (N-linked (GlcNAc...) asparagine). Transmembrane regions (helical) follow at residues 1230–1250, 1260–1280, 1309–1329, 1334–1354, 1356–1376, 1397–1417, 1491–1511, and 1520–1540; these read FVSV…GNSI, IFLI…KFYI, IPMA…PVGF, STAG…SSWG, WICA…FFFV, YWMY…SSIF, CFGI…FFIY, and FGMG…KGVF.

Belongs to the ABC transporter superfamily. ABCG family. PDR (TC 3.A.1.205) subfamily.

The protein resides in the cell membrane. The catalysed reaction is voriconazole(in) + ATP + H2O = voriconazole(out) + ADP + phosphate + H(+). It carries out the reaction fluconazole(in) + ATP + H2O = fluconazole(out) + ADP + phosphate + H(+). Its function is as follows. Pleiotropic ABC efflux transporter involved in the basal level of azole susceptibility. Confers resistance to fluconazole and voriconazole. This is ABC multidrug transporter atrF from Aspergillus fumigatus (strain ATCC MYA-4609 / CBS 101355 / FGSC A1100 / Af293) (Neosartorya fumigata).